Here is a 446-residue protein sequence, read N- to C-terminus: Trigger factor (446 aa).

The PPIase FKBP-type domain occupies 182–267; the sequence is GDKVVVDYQN…VKNIFMMKAI (86 aa).

Belongs to the FKBP-type PPIase family. Tig subfamily.

The protein resides in the cytoplasm. It catalyses the reaction [protein]-peptidylproline (omega=180) = [protein]-peptidylproline (omega=0). Involved in protein export. Acts as a chaperone by maintaining the newly synthesized protein in an open conformation. Functions as a peptidyl-prolyl cis-trans isomerase. In Ehrlichia ruminantium (strain Gardel), this protein is Trigger factor.